A 164-amino-acid polypeptide reads, in one-letter code: R-phycoerythrin alpha chain (164 aa).

(2R,3E)-phycoerythrobilin-binding residues include Cys82 and Cys139.

This sequence belongs to the phycobiliprotein family. In terms of assembly, heterodimer of an alpha and a beta chain. Contains two covalently linked bilin chromophores.

Its subcellular location is the plastid. It is found in the chloroplast thylakoid membrane. Light-harvesting photosynthetic bile pigment-protein from the phycobiliprotein complex. This chain is R-phycoerythrin alpha chain (cpeA), found in Pyropia tenera (Nori).